Consider the following 378-residue polypeptide: Diacetylchitobiose uptake system ATP-binding protein MsiK (378 aa).

The ABC transporter domain occupies 4-236; that stretch reads VTFDKATRVY…PANLFVAGFI (233 aa). 38–45 contributes to the ATP binding site; sequence GPSGCGKS.

This sequence belongs to the ABC transporter superfamily. In terms of assembly, the DasABC-MsiK complex is composed of two ATP-binding proteins (MsiK), two transmembrane proteins (DasB and DasC) and a solute-binding protein (DasA). The NgcEFG-MsiK complex is composed of two ATP-binding proteins (MsiK), two transmembrane proteins (NgcF and NgcG) and a solute-binding protein (NgcE).

It is found in the cell membrane. Part of the ABC transporter complexes DasABC-MsiK and NgcEFG-MsiK involved in N,N'-diacetylchitobiose ((GlcNAc)2) uptake. Responsible for energy coupling to the transport system. The protein is Diacetylchitobiose uptake system ATP-binding protein MsiK of Streptomyces coelicolor (strain ATCC BAA-471 / A3(2) / M145).